The following is a 637-amino-acid chain: Keratin, type II cytoskeletal 1 (637 aa).

The tract at residues 1–187 (MSLQCSSRSL…DPQIQKVKSQ (187 aa)) is head. Omega-N-methylarginine is present on Arg12. A phosphoserine mark is found at Ser21 and Ser24. Arg49 carries the post-translational modification Omega-N-methylarginine. Ser67 is modified (phosphoserine). Residues 180–328 (QIQKVKSQER…DIDFFSALYQ (149 aa)) adopt a coiled-coil conformation. Residues 188 to 223 (EREQIKSLNDKFASFIDKVRFLEQQNQVLQTKWELL) form a coil 1A region. Positions 188–501 (EREQIKSLND…KLLEGEEIRM (314 aa)) constitute an IF rod domain. The tract at residues 224–243 (QQVDTTTRTQNLDPFFENYI) is linker 1. The tract at residues 244-334 (SILRRKVDSL…ALYQMEMSQM (91 aa)) is coil 1B. The residue at position 284 (Lys284) is an N6,N6-dimethyllysine. A linker 12 region spans residues 335–358 (QTQISETNVVLSMDNNRSLDLDGI). Ser352 carries the phosphoserine modification. The segment at 359–497 (ISEVKAQYDS…ATYKKLLEGE (139 aa)) is coil 2. A coiled-coil region spans residues 397–483 (DSVRNTKMEI…QELMNTKLAL (87 aa)). The interval 498 to 637 (EIRMSGECTP…VSTSYSRGTK (140 aa)) is tail. Disordered regions lie at residues 505-533 (CTPN…SGGG) and 563-637 (YGGG…RGTK). The segment covering 509 to 524 (VSVSVSTSHTSMSGSS) has biased composition (low complexity). An omega-N-methylarginine mark is found at Arg526, Arg585, and Arg607. The segment covering 563–618 (YGGGSGGGSYGGGSGGGSSGSHRGGSGGGGGSSGGSYGGSSGGGRGGSSSGGGGVK) has biased composition (gly residues). Residues 624–637 (TVKFVSTSYSRGTK) show a composition bias toward polar residues.

The protein belongs to the intermediate filament family. In terms of assembly, heterotetramer of two type I and two type II keratins. Heterodimer with KRT10. Two heterodimers of KRT1 and KRT10 form a heterotetramer. Forms a heterodimer with KRT14; the interaction is more abundant in the absence of KRT5. Interacts with PLEC isoform 1C, when in a heterodimer with KRT10. Interacts with ITGB1 in the presence of RACK1 and SRC, and with RACK1. Interacts with C1QBP; the association represents a cell surface kininogen receptor. Interacts with EPPK1; interaction is dependent of higher-order structure of intermediate filament. Undergoes deimination of some arginine residues (citrullination). In terms of tissue distribution, expressed in the infundibular regions of the ear, the interfollicular epidermis of the back, in the interscale regions containing hair follicles in the tail, and in the soles of the footpads (at protein level).

It is found in the cell membrane. It localises to the cytoplasm. In terms of biological role, may regulate the activity of kinases such as PKC and SRC via binding to integrin beta-1 (ITB1) and the receptor of activated protein C kinase 1 (RACK1). In complex with C1QBP is a high affinity receptor for kininogen-1/HMWK. This Mus musculus (Mouse) protein is Keratin, type II cytoskeletal 1 (Krt1).